Here is a 564-residue protein sequence, read N- to C-terminus: Major facilitator superfamily transporter MPN_076 (564 aa).

The next 12 membrane-spanning stretches (helical) occupy residues 1–21 (MLWAIVLLGYLLFVVEWFVID), 65–85 (ITLLRAVGSVLCGIVVLKFGY), 89–109 (VMIMMGLMCLCFPFLIIGDPL), 176–196 (IAGYALFIIFRSTIAIGGTTL), 220–240 (NLWGFNSGIVVAFVPFLFQSV), 249–269 (VFILTALILIGFGILCVFAWF), 306–326 (MIGMYGICLVVLVNPLTGGWW), 358–378 (AGLPTLAILWVLGYGMGYMVF), 404–424 (IVIVLFAATLGVGTAVGFAFV), 425–445 (AIATFIGGSFAWSMQSTILIL), 457–477 (VSVLFGYIWGFGYVIYTAFDI), and 501–521 (GAIAGVALFAGLLLAAIAIVV).

The protein belongs to the major facilitator superfamily.

It localises to the cell membrane. The polypeptide is Major facilitator superfamily transporter MPN_076 (Mycoplasma pneumoniae (strain ATCC 29342 / M129 / Subtype 1) (Mycoplasmoides pneumoniae)).